Here is a 240-residue protein sequence, read N- to C-terminus: ATP synthase subunit a (240 aa).

The next 5 membrane-spanning stretches (helical) occupy residues 21-41 (LSSMLMLTVTAAIVFLIAMLF), 83-103 (AVTLLLFIFVANMLGLPFAII), 116-136 (DPTVTLTLSTLMVLLTHFYGV), 184-204 (LLGLLATLGTAGAAGMLGAAI), and 207-227 (LIWQGFSIFVGSIQAYIFVML).

It belongs to the ATPase A chain family. F-type ATPases have 2 components, CF(1) - the catalytic core - and CF(0) - the membrane proton channel. CF(1) has five subunits: alpha(3), beta(3), gamma(1), delta(1), epsilon(1). CF(0) has three main subunits: a(1), b(2) and c(9-12). The alpha and beta chains form an alternating ring which encloses part of the gamma chain. CF(1) is attached to CF(0) by a central stalk formed by the gamma and epsilon chains, while a peripheral stalk is formed by the delta and b chains.

Its subcellular location is the cell membrane. Its function is as follows. Key component of the proton channel; it plays a direct role in the translocation of protons across the membrane. This Macrococcus caseolyticus (strain JCSC5402) (Macrococcoides caseolyticum) protein is ATP synthase subunit a.